The primary structure comprises 525 residues: Cytochrome P450 4V2 (525 aa).

The chain crosses the membrane as a helical span at residues 13 to 33 (LLLWGAASAVSLAGASLVLSL). Heme contacts are provided by glutamate 329 and cysteine 467.

Belongs to the cytochrome P450 family. The cofactor is heme.

Its subcellular location is the endoplasmic reticulum membrane. It catalyses the reaction dodecanoate + reduced [NADPH--hemoprotein reductase] + O2 = 12-hydroxydodecanoate + oxidized [NADPH--hemoprotein reductase] + H2O + H(+). The catalysed reaction is tetradecanoate + reduced [NADPH--hemoprotein reductase] + O2 = 14-hydroxytetradecanoate + oxidized [NADPH--hemoprotein reductase] + H2O + H(+). The enzyme catalyses hexadecanoate + reduced [NADPH--hemoprotein reductase] + O2 = 16-hydroxyhexadecanoate + oxidized [NADPH--hemoprotein reductase] + H2O + H(+). It carries out the reaction (5Z,8Z,11Z,14Z,17Z)-eicosapentaenoate + reduced [NADPH--hemoprotein reductase] + O2 = 20-hydroxy-(5Z,8Z,11Z,14Z,17Z)-eicosapentaenoate + oxidized [NADPH--hemoprotein reductase] + H2O + H(+). It catalyses the reaction (4Z,7Z,10Z,13Z,16Z,19Z)-docosahexaenoate + reduced [NADPH--hemoprotein reductase] + O2 = 22-hydroxy-(4Z,7Z,10Z,13Z,16Z,19Z)-docosahexaenoate + oxidized [NADPH--hemoprotein reductase] + H2O + H(+). It participates in lipid metabolism; fatty acid metabolism. Inhibited by N-hydroxy-N'-(4-n-butyl-2-methylphenyl formamidine)(HET0016) with an IC(50) of 38 nM. In terms of biological role, a cytochrome P450 monooxygenase involved in fatty acid metabolism in the eye. Catalyzes the omega-hydroxylation of polyunsaturated fatty acids (PUFAs) docosahexaenoate (DHA) and its precursor eicosapentaenoate (EPA), and may contribute to the homeostasis of these retinal PUFAs. Omega hydroxylates saturated fatty acids such as laurate, myristate and palmitate, the catalytic efficiency decreasing in the following order: myristate &gt; laurate &gt; palmitate (C14&gt;C12&gt;C16). Mechanistically, uses molecular oxygen inserting one oxygen atom into a substrate, and reducing the second into a water molecule, with two electrons provided by NADPH via cytochrome P450 reductase (CPR; NADPH-ferrihemoprotein reductase). This chain is Cytochrome P450 4V2 (CYP4V2), found in Pongo abelii (Sumatran orangutan).